The following is a 400-amino-acid chain: Nicotinate phosphoribosyltransferase (400 aa).

His-220 is subject to Phosphohistidine; by autocatalysis.

This sequence belongs to the NAPRTase family. In terms of processing, transiently phosphorylated on a His residue during the reaction cycle. Phosphorylation strongly increases the affinity for substrates and increases the rate of nicotinate D-ribonucleotide production. Dephosphorylation regenerates the low-affinity form of the enzyme, leading to product release.

It carries out the reaction nicotinate + 5-phospho-alpha-D-ribose 1-diphosphate + ATP + H2O = nicotinate beta-D-ribonucleotide + ADP + phosphate + diphosphate. Its pathway is cofactor biosynthesis; NAD(+) biosynthesis; nicotinate D-ribonucleotide from nicotinate: step 1/1. In terms of biological role, catalyzes the synthesis of beta-nicotinate D-ribonucleotide from nicotinate and 5-phospho-D-ribose 1-phosphate at the expense of ATP. The sequence is that of Nicotinate phosphoribosyltransferase from Shigella boydii serotype 18 (strain CDC 3083-94 / BS512).